The chain runs to 142 residues: Hemoglobin subunit zeta (142 aa).

The residue at position 2 (serine 2) is an N-acetylserine. The Globin domain occupies 2–142 (SLTKTEGTII…VSSVLTEKYR (141 aa)). Threonine 29 carries the post-translational modification Phosphothreonine. A Phosphoserine modification is found at serine 53. Histidine 59 lines the heme b pocket. Phosphoserine occurs at positions 73 and 82. Residue histidine 88 participates in heme b binding.

Belongs to the globin family. As to quaternary structure, heterotetramer of two zeta chains and beta-type chains.

Functionally, the zeta chain is an alpha-type chain of mammalian embryonic hemoglobin. This chain is Hemoglobin subunit zeta (HBZ1), found in Pan troglodytes (Chimpanzee).